We begin with the raw amino-acid sequence, 193 residues long: L-2,4-diaminobutyric acid acetyltransferase (193 aa).

The interval 1–22 (MSLQTLSTPTAEPVEEPRPVEA) is disordered. The 153-residue stretch at 33-185 (ALLRAPQLGD…EHAPEDLYRI (153 aa)) folds into the N-acetyltransferase domain.

It belongs to the acetyltransferase family. EctA subfamily.

The catalysed reaction is L-2,4-diaminobutanoate + acetyl-CoA = (2S)-4-acetamido-2-aminobutanoate + CoA + H(+). The protein operates within amine and polyamine biosynthesis; ectoine biosynthesis; L-ectoine from L-aspartate 4-semialdehyde: step 2/3. In terms of biological role, catalyzes the acetylation of L-2,4-diaminobutyrate (DABA) to gamma-N-acetyl-alpha,gamma-diaminobutyric acid (ADABA) with acetyl coenzyme A. The sequence is that of L-2,4-diaminobutyric acid acetyltransferase (ectA) from Nocardia farcinica (strain IFM 10152).